Here is an 89-residue protein sequence, read N- to C-terminus: Large ribosomal subunit protein bL27 (89 aa).

The segment at 1-26 is disordered; it reads MATKKAGGSSKNGRDSAGRRLGLKKT.

Belongs to the bacterial ribosomal protein bL27 family.

The polypeptide is Large ribosomal subunit protein bL27 (Orientia tsutsugamushi (strain Boryong) (Rickettsia tsutsugamushi)).